Reading from the N-terminus, the 466-residue chain is Rho GTPase-activating protein 1 (466 aa).

2 disordered regions span residues 1-31 (MTEV…SLSY) and 65-84 (EEQD…DDGG). Residues 8-31 (PSSPSASHSSSSSSSSPSPSSLSY) are compositionally biased toward low complexity. Over residues 65-74 (EEQDLRRRSS) the composition is skewed to basic and acidic residues. One can recognise a CRIB domain in the interval 117 to 130 (IGWPTNVRHVAHVT). A Rho-GAP domain is found at 162–342 (VSTESMQLSY…TLIEKTLRER (181 aa)). The tract at residues 354-402 (PLEPSDESGHQSPSQSLAFNTSEQSEETQSDNIENAENQSSSSEISDEL) is disordered. 2 stretches are compositionally biased toward polar residues: residues 363 to 376 (HQSP…NTSE) and 383 to 397 (SDNI…SSSE).

In terms of biological role, acts as a GTPase activator for the Rac-type GTPase by converting it to an inactive GDP-bound state. This Arabidopsis thaliana (Mouse-ear cress) protein is Rho GTPase-activating protein 1 (ROPGAP1).